Reading from the N-terminus, the 202-residue chain is Small ribosomal subunit protein uS4 (202 aa).

The tract at residues 16–42 (GELPGLSRKNPRRAYPPGQHGQARKKR) is disordered. The S4 RNA-binding domain maps to 90 to 151 (MRLDNTVFRL…QERSRRLVEA (62 aa)).

It belongs to the universal ribosomal protein uS4 family. Part of the 30S ribosomal subunit. Contacts protein S5. The interaction surface between S4 and S5 is involved in control of translational fidelity.

In terms of biological role, one of the primary rRNA binding proteins, it binds directly to 16S rRNA where it nucleates assembly of the body of the 30S subunit. Functionally, with S5 and S12 plays an important role in translational accuracy. The protein is Small ribosomal subunit protein uS4 of Rippkaea orientalis (strain PCC 8801 / RF-1) (Cyanothece sp. (strain PCC 8801)).